Here is a 364-residue protein sequence, read N- to C-terminus: WAT1-related protein At3g30340 (364 aa).

The next 10 helical transmembrane spans lie at 9 to 29, 41 to 61, 76 to 96, 102 to 122, 138 to 158, 183 to 203, 215 to 235, 251 to 271, 277 to 297, and 304 to 324; these read WKAV…NVMF, VATT…AIFL, SLFF…LIGL, TFSL…ALVF, LLGT…KGTA, WAMG…WFIV, YTST…LSLI, VLAL…GMSW, GAVF…IFSF, and IYCG…ILLW. EamA domains are found at residues 26–152 and 195–323; these read NVMF…LVLT and IIWS…YILL.

It belongs to the drug/metabolite transporter (DMT) superfamily. Plant drug/metabolite exporter (P-DME) (TC 2.A.7.4) family.

Its subcellular location is the membrane. The polypeptide is WAT1-related protein At3g30340 (Arabidopsis thaliana (Mouse-ear cress)).